The sequence spans 320 residues: Phosphate acetyltransferase (320 aa).

Belongs to the phosphate acetyltransferase and butyryltransferase family.

It localises to the cytoplasm. It carries out the reaction acetyl-CoA + phosphate = acetyl phosphate + CoA. It participates in metabolic intermediate biosynthesis; acetyl-CoA biosynthesis; acetyl-CoA from acetate: step 2/2. The sequence is that of Phosphate acetyltransferase (pta) from Mycoplasma pneumoniae (strain ATCC 29342 / M129 / Subtype 1) (Mycoplasmoides pneumoniae).